We begin with the raw amino-acid sequence, 906 residues long: Cadherin-2 (906 aa).

Positions 1–25 are cleaved as a signal peptide; the sequence is MCRIAGAPRTLLPLLAALLQASVEA. The propeptide occupies 26 to 159; that stretch reads SGEIALCKTG…HSGHLQRQKR (134 aa). Phosphoserine occurs at positions 96 and 135. 5 Cadherin domains span residues 160–267, 268–382, 383–497, 498–603, and 604–714; these read DWVI…RPEF, LHQV…PPEF, TAMT…NPYF, APNP…DNAP, and QVLP…DVDR. Residues 160-724 lie on the Extracellular side of the membrane; sequence DWVIPPINLP…IVGAGLGTGA (565 aa). Glu-170 is a Ca(2+) binding site. Asn-190 carries N-linked (GlcNAc...) asparagine glycosylation. 7 residues coordinate Ca(2+): Asp-226, Glu-228, Asp-259, Met-260, Asn-261, Asp-262, and Asn-263. Asn-273 carries an N-linked (GlcNAc...) asparagine glycan. Residues Asp-293, Asp-295, and Asn-301 each coordinate Ca(2+). N-linked (GlcNAc...) asparagine glycosylation is present at Asn-325. Asp-353 serves as a coordination point for Ca(2+). N-linked (GlcNAc...) asparagine glycosylation is found at Asn-402, Asn-572, Asn-622, Asn-651, and Asn-692. The helical transmembrane segment at 725-745 threads the bilayer; sequence IIAILLCIIILLILVLMFVVW. At 746 to 906 the chain is on the cytoplasmic side; it reads MKRRDKERQA…LADMYGGGDD (161 aa). Residues 863–880 are compositionally biased toward low complexity; it reads SGSTAGSLSSLNSSSSGG. Residues 863 to 884 are disordered; sequence SGSTAGSLSSLNSSSSGGEQDY.

As to quaternary structure, homodimer (via extracellular region). Can also form heterodimers with other cadherins (via extracellular region). Dimerization occurs in trans, i.e. with a cadherin chain from another cell. Interacts with CDCP1. Interacts with PCDH8; this complex may also include TAOK2. The interaction with PCDH8 may lead to internalization through TAOK2/p38 MAPK pathway. Identified in a complex containing FGFR4, NCAM1, CDH2, PLCG1, FRS2, SRC, SHC1, GAP43 and CTTN. May interact with OBSCN (via protein kinase domain 2). Interacts with FBXO45. Post-translationally, cleaved by MMP24. Ectodomain cleavage leads to the generation of a soluble 90 kDa N-terminal soluble fragment and a 45 kDa membrane-bound C-terminal fragment 1 (CTF1), which is further cleaved by gamma-secretase into a 35 kDa. Cleavage in neural stem cells by MMP24 affects CDH2-mediated anchorage of neural stem cells to ependymocytes in the adult subependymal zone, leading to modulate neural stem cell quiescence.

The protein resides in the cell membrane. It localises to the sarcolemma. It is found in the cell junction. The protein localises to the cell surface. Its subcellular location is the desmosome. The protein resides in the adherens junction. In terms of biological role, calcium-dependent cell adhesion protein; preferentially mediates homotypic cell-cell adhesion by dimerization with a CDH2 chain from another cell. Cadherins may thus contribute to the sorting of heterogeneous cell types. Acts as a regulator of neural stem cells quiescence by mediating anchorage of neural stem cells to ependymocytes in the adult subependymal zone: upon cleavage by MMP24, CDH2-mediated anchorage is affected, leading to modulate neural stem cell quiescence. Plays a role in cell-to-cell junction formation between pancreatic beta cells and neural crest stem (NCS) cells, promoting the formation of processes by NCS cells. Required for proper neurite branching. Required for pre- and postsynaptic organization. CDH2 may be involved in neuronal recognition mechanism. In hippocampal neurons, may regulate dendritic spine density. The chain is Cadherin-2 (CDH2) from Callithrix jacchus (White-tufted-ear marmoset).